Consider the following 628-residue polypeptide: Biosynthetic arginine decarboxylase (628 aa).

K101 is modified (N6-(pyridoxal phosphate)lysine). 281 to 291 (VDVGGGLGVDY) is a binding site for substrate.

It belongs to the Orn/Lys/Arg decarboxylase class-II family. SpeA subfamily. The cofactor is Mg(2+). Requires pyridoxal 5'-phosphate as cofactor.

It catalyses the reaction L-arginine + H(+) = agmatine + CO2. Its pathway is amine and polyamine biosynthesis; agmatine biosynthesis; agmatine from L-arginine: step 1/1. Its function is as follows. Catalyzes the biosynthesis of agmatine from arginine. In Alkalilimnicola ehrlichii (strain ATCC BAA-1101 / DSM 17681 / MLHE-1), this protein is Biosynthetic arginine decarboxylase.